A 523-amino-acid polypeptide reads, in one-letter code: Solute carrier family 2, facilitated glucose transporter member 2 (523 aa).

Topologically, residues 1–10 (MSEDKITGTL) are cytoplasmic. A helical membrane pass occupies residues 11–31 (AFTVFTAVLSSFQFGYDIGVI). Residues 32-97 (NAPQEVIISH…SAHIVTMLWS (66 aa)) lie on the Extracellular side of the membrane. N-linked (GlcNAc...) asparagine glycosylation occurs at asparagine 62. Residues 98 to 118 (LSVSSFAVGGMVASFFGGWLG) traverse the membrane as a helical segment. The Cytoplasmic portion of the chain corresponds to 119-126 (DKLGRIKA). A helical transmembrane segment spans residues 127–147 (MLAANSLSLTGALLMGCSKFG). Over 148–157 (PAHALIIAGR) the chain is Extracellular. A helical transmembrane segment spans residues 158 to 178 (SVSGLYCGLISGLVPMYIGEI). At 179–186 (APTTLRGA) the chain is on the cytoplasmic side. Residues 187 to 207 (LGTLHQLALVTGILISQIAGL) form a helical membrane-spanning segment. Residue glutamine 192 coordinates D-glucose. Residues 208–216 (SFILGNQDH) are Extracellular-facing. The chain crosses the membrane as a helical span at residues 217 to 237 (WHILLGLSAVPALLQCLLLLF). Residues 238 to 302 (CPESPRYLYI…LFTDANYRQP (65 aa)) lie on the Cytoplasmic side of the membrane. Residues 303-323 (ILVALMLHMAQQFSGINGIFY) traverse the membrane as a helical segment. Residues 313 to 314 (QQ) and asparagine 319 contribute to the D-glucose site. Residues 324 to 337 (YSTSIFQTAGISQP) are Extracellular-facing. The chain crosses the membrane as a helical span at residues 338-358 (VYATIGVGAINMIFTAVSVLL). Asparagine 348 lines the D-glucose pocket. At 359–367 (VEKAGRRTL) the chain is on the cytoplasmic side. Residues 368-388 (FLTGMIGMFFCTIFMSVGLVL) traverse the membrane as a helical segment. Topologically, residues 389-401 (LDKFAWMSYVSMT) are extracellular. A helical transmembrane segment spans residues 402 to 422 (AIFLFVSFFEIGPGPIPWFMV). Residues glutamate 411 and tryptophan 419 each contribute to the D-glucose site. Over 423–432 (AEFFSQGPRP) the chain is Cytoplasmic. A helical transmembrane segment spans residues 433 to 453 (TALALAAFSNWVCNFVIALCF). Residues 454–460 (QYIADFL) lie on the Extracellular side of the membrane. The chain crosses the membrane as a helical span at residues 461–481 (GPYVFFLFAGVVLVFTLFTFF). Over 482-523 (KVPETKGKSFEEIAAEFRKKSGSAPPRKAAVQMEFLASSESV) the chain is Cytoplasmic. Phosphoserine is present on serine 522.

The protein belongs to the major facilitator superfamily. Sugar transporter (TC 2.A.1.1) family. Glucose transporter subfamily. Post-translationally, N-glycosylated; required for stability and retention at the cell surface of pancreatic beta cells. In embryo, expressed in endoderm layer of yolk sac and liver primordium.

The protein localises to the cell membrane. It carries out the reaction D-glucose(out) = D-glucose(in). The enzyme catalyses D-fructose(out) = D-fructose(in). The catalysed reaction is L-dehydroascorbate(out) = L-dehydroascorbate(in). It catalyses the reaction D-galactose(in) = D-galactose(out). D-glucose and maltose competitively inhibit fructose transport. D-glucose, D-fructose and maltose inhibit deoxyglucose transport. In terms of biological role, facilitative hexose transporter that mediates the transport of glucose, fructose and galactose. Likely mediates the bidirectional transfer of glucose across the plasma membrane of hepatocytes and is responsible for uptake of glucose by the beta cells; may comprise part of the glucose-sensing mechanism of the beta cell. May also participate with the Na(+)/glucose cotransporter in the transcellular transport of glucose in the small intestine and kidney. Also able to mediate the transport of dehydroascorbate. The sequence is that of Solute carrier family 2, facilitated glucose transporter member 2 from Mus musculus (Mouse).